The primary structure comprises 212 residues: Uracil phosphoribosyltransferase (212 aa).

Residues arginine 78, arginine 103, and aspartate 130–serine 138 each bind 5-phospho-alpha-D-ribose 1-diphosphate. Residues isoleucine 193 and glycine 198 to alanine 200 contribute to the uracil site. Aspartate 199 serves as a coordination point for 5-phospho-alpha-D-ribose 1-diphosphate.

This sequence belongs to the UPRTase family. Requires Mg(2+) as cofactor.

It carries out the reaction UMP + diphosphate = 5-phospho-alpha-D-ribose 1-diphosphate + uracil. The protein operates within pyrimidine metabolism; UMP biosynthesis via salvage pathway; UMP from uracil: step 1/1. With respect to regulation, allosterically activated by GTP. Functionally, catalyzes the conversion of uracil and 5-phospho-alpha-D-ribose 1-diphosphate (PRPP) to UMP and diphosphate. The chain is Uracil phosphoribosyltransferase from Pseudomonas syringae pv. tomato (strain ATCC BAA-871 / DC3000).